The chain runs to 502 residues: ATP synthase subunit alpha (502 aa).

A disordered region spans residues 117–139 (GMGPVLTSKTRPIESPAPGVMDR). 169 to 176 (GDRQTGKT) provides a ligand contact to ATP.

It belongs to the ATPase alpha/beta chains family. As to quaternary structure, F-type ATPases have 2 components, CF(1) - the catalytic core - and CF(0) - the membrane proton channel. CF(1) has five subunits: alpha(3), beta(3), gamma(1), delta(1), epsilon(1). CF(0) has three main subunits: a(1), b(2) and c(9-12). The alpha and beta chains form an alternating ring which encloses part of the gamma chain. CF(1) is attached to CF(0) by a central stalk formed by the gamma and epsilon chains, while a peripheral stalk is formed by the delta and b chains.

It localises to the cell membrane. It carries out the reaction ATP + H2O + 4 H(+)(in) = ADP + phosphate + 5 H(+)(out). In terms of biological role, produces ATP from ADP in the presence of a proton gradient across the membrane. The alpha chain is a regulatory subunit. The chain is ATP synthase subunit alpha from Bacillus licheniformis (strain ATCC 14580 / DSM 13 / JCM 2505 / CCUG 7422 / NBRC 12200 / NCIMB 9375 / NCTC 10341 / NRRL NRS-1264 / Gibson 46).